The sequence spans 348 residues: Probable dual-specificity RNA methyltransferase RlmN (348 aa).

Glu-92 (proton acceptor) is an active-site residue. A Radical SAM core domain is found at 98–331 (HPDRVTACIS…NEIRREKGTD (234 aa)). A disulfide bridge links Cys-105 with Cys-336. Residues Cys-112, Cys-116, and Cys-119 each contribute to the [4Fe-4S] cluster site. S-adenosyl-L-methionine contacts are provided by residues 159 to 160 (GE), Ser-191, 214 to 216 (SLH), and Asn-290. Residue Cys-336 is the S-methylcysteine intermediate of the active site.

This sequence belongs to the radical SAM superfamily. RlmN family. [4Fe-4S] cluster is required as a cofactor.

The protein resides in the cytoplasm. The enzyme catalyses adenosine(2503) in 23S rRNA + 2 reduced [2Fe-2S]-[ferredoxin] + 2 S-adenosyl-L-methionine = 2-methyladenosine(2503) in 23S rRNA + 5'-deoxyadenosine + L-methionine + 2 oxidized [2Fe-2S]-[ferredoxin] + S-adenosyl-L-homocysteine. It carries out the reaction adenosine(37) in tRNA + 2 reduced [2Fe-2S]-[ferredoxin] + 2 S-adenosyl-L-methionine = 2-methyladenosine(37) in tRNA + 5'-deoxyadenosine + L-methionine + 2 oxidized [2Fe-2S]-[ferredoxin] + S-adenosyl-L-homocysteine. In terms of biological role, specifically methylates position 2 of adenine 2503 in 23S rRNA and position 2 of adenine 37 in tRNAs. The chain is Probable dual-specificity RNA methyltransferase RlmN from Fervidobacterium nodosum (strain ATCC 35602 / DSM 5306 / Rt17-B1).